We begin with the raw amino-acid sequence, 388 residues long: L-cysteine desulfidase (388 aa).

The Proton acceptor role is filled by cysteine 25. 3 residues coordinate [4Fe-4S] cluster: cysteine 282, cysteine 322, and cysteine 329.

The protein belongs to the L-cysteine desulfidase family. In terms of assembly, homotrimer. The cofactor is [4Fe-4S] cluster.

The catalysed reaction is L-cysteine + H2O = hydrogen sulfide + pyruvate + NH4(+) + H(+). In terms of biological role, catalyzes the cleavage of L-cysteine to form 2-aminoprop-2-enoate and sulfide. The former then spontaneously hydrolyzes to pyruvate and NH(3). May be responsible for the production of sulfide required for the biosynthesis of iron-sulfur centers in this archaea. Is very specific for L-cysteine, with no activity being detected with D-cysteine, L-homocysteine, 3-mercaptopropionate (cysteine without the amino group), cysteamine (cysteine without the carboxylate), or mercaptolactate (the hydroxyl analog of cysteine). The chain is L-cysteine desulfidase from Methanocaldococcus jannaschii (strain ATCC 43067 / DSM 2661 / JAL-1 / JCM 10045 / NBRC 100440) (Methanococcus jannaschii).